A 291-amino-acid polypeptide reads, in one-letter code: 33 kDa chaperonin (291 aa).

2 disulfide bridges follow: cysteine 229–cysteine 231 and cysteine 262–cysteine 265.

This sequence belongs to the HSP33 family. In terms of processing, under oxidizing conditions two disulfide bonds are formed involving the reactive cysteines. Under reducing conditions zinc is bound to the reactive cysteines and the protein is inactive.

It localises to the cytoplasm. Functionally, redox regulated molecular chaperone. Protects both thermally unfolding and oxidatively damaged proteins from irreversible aggregation. Plays an important role in the bacterial defense system toward oxidative stress. In Vibrio vulnificus (strain YJ016), this protein is 33 kDa chaperonin.